Here is a 460-residue protein sequence, read N- to C-terminus: Sexual development regulator velC (460 aa).

Disordered stretches follow at residues 67–131 (VGPD…PQAP), 152–216 (YAPR…RPDP), and 422–460 (KKGN…SARQ). Polar residues predominate over residues 192-207 (PVTTNGRPPDSNSPMV). A Velvet domain is found at 239–422 (LSDNRFNLQI…KEQGCIISIK (184 aa)). Residues 423–437 (KGNDRSKNTRSHDDS) are compositionally biased toward basic and acidic residues. The span at 451-460 (GKRRRRSARQ) shows a compositional bias: basic residues.

It belongs to the velvet family. VelC subfamily. In terms of assembly, interacts with VE1.

It is found in the nucleus. Velvet-domain-containing protein that acts as a positive regulator of sexual development. Dispensable for regulation of conidial size, hyphal hydrophobicity, fumonisin production, and oxidant resistance. In Gibberella moniliformis (strain M3125 / FGSC 7600) (Maize ear and stalk rot fungus), this protein is Sexual development regulator velC.